We begin with the raw amino-acid sequence, 253 residues long: 3-isopropylmalate dehydratase small subunit 3 (253 aa).

The transit peptide at 1 to 56 (MATSQQFLNPTLFKSLASSNKNSCTLCPSPFLQLKSASTIFNYKPLTSSSATIITR) directs the protein to the chloroplast.

The protein belongs to the LeuD family. As to quaternary structure, heterodimer of the large LEUC/IIL1 subunit and the small LEUD (SSU1, SSU2 or SSU3) subunits. In terms of tissue distribution, expressed in vascular bundles of roots, cotyledons and rosette leaves. Expressed in stem vascular bundles which branche off into lateral inflorescences. Expressed in connective tissues in anthers. In hypocotyls, expressed in parenchyma cells surrounding the vasculature. In rosette leaves, expressed in phloem cells and cells close to the xylem along the vascular bundles. In roots of adult plants, expressed in cells closely associated with the stele. In flowering stalks, expressed in parenchyma cells associated with the phloem or the xylem.

It localises to the plastid. The protein localises to the chloroplast stroma. The catalysed reaction is (2R,3S)-3-isopropylmalate = (2S)-2-isopropylmalate. The enzyme catalyses a 2-(omega-methylsulfanyl)alkylmalate = a 2-(omega-methylsulfanyl)alkylmaleate + H2O. It catalyses the reaction 2-(3-methylsulfanyl)propylmalate = 2-(2-methylsulfanyl)propylmaleate + H2O. It carries out the reaction a 3-(omega-methylsulfanyl)alkylmalate = a 2-(omega-methylsulfanyl)alkylmaleate + H2O. The catalysed reaction is 2-(2-methylsulfanyl)ethylmalate = 2-(2-methylsulfanyl)ethylmaleate + H2O. The enzyme catalyses 3-(2-methylsulfanyl)ethylmalate = 2-(2-methylsulfanyl)ethylmaleate + H2O. It catalyses the reaction 3-(3-methylsulfanyl)propylmalate = 2-(2-methylsulfanyl)propylmaleate + H2O. It functions in the pathway amino-acid biosynthesis; L-leucine biosynthesis; L-leucine from 3-methyl-2-oxobutanoate: step 2/4. Functionally, catalyzes the isomerization between 2-isopropylmalate and 3-isopropylmalate, via the formation of 2-isopropylmaleate. Functions redundantly with LEUD1 in the methionine chain elongation pathway of aliphatic glucosinolate formation. The polypeptide is 3-isopropylmalate dehydratase small subunit 3 (Arabidopsis thaliana (Mouse-ear cress)).